Here is a 343-residue protein sequence, read N- to C-terminus: Multidrug resistance protein MdtN (343 aa).

Residues 1–12 (MESTPKKAPRSK) lie on the Cytoplasmic side of the membrane. The chain crosses the membrane as a helical; Signal-anchor for type II membrane protein span at residues 13–33 (FPALLVVALALVALVFVIWRV). Over 34–343 (DSAPSTNDAY…ASAVANLEPQ (310 aa)) the chain is Periplasmic.

It belongs to the membrane fusion protein (MFP) (TC 8.A.1) family. Could be part of a tripartite efflux system composed of MdtN, MdtO and MdtP.

The protein localises to the cell inner membrane. In terms of biological role, could be involved in resistance to puromycin, acriflavine and tetraphenylarsonium chloride. This Escherichia coli O6:H1 (strain CFT073 / ATCC 700928 / UPEC) protein is Multidrug resistance protein MdtN (mdtN).